Reading from the N-terminus, the 429-residue chain is Xyloglucan O-acetyltransferase 1 (429 aa).

Topologically, residues 1 to 20 (MGSPFKDHHHHHHPFSLAKK) are cytoplasmic. Residues 21-41 (LIPWTFYAMIPLVLFRLYFYP) form a helical; Signal-anchor for type II membrane protein membrane-spanning segment. Residues 42–429 (YPLHNITTPI…KWDYESRREE (388 aa)) are Lumenal-facing. N-linked (GlcNAc...) asparagine glycosylation is found at N46 and N89. Disulfide bonds link C72/C122, C93/C158, C102/C402, and C317/C398. A GDS motif motif is present at residues 145-147 (GDS). Catalysis depends on S147, which acts as the Nucleophile. Residues N189, N263, and N351 are each glycosylated (N-linked (GlcNAc...) asparagine). D397 functions as the Proton donor in the catalytic mechanism. The short motif at 397 to 400 (DCVH) is the DXXH motif element. Catalysis depends on H400, which acts as the Proton acceptor.

It belongs to the PC-esterase family. TBL subfamily.

The protein resides in the golgi apparatus membrane. Xyloglucan acetyltransferase that catalyzes the acetylation of fucosylated Gal residues on xyloglucan side chains. Predominantly catalyze 6-O-monoacetylation of Gal residues in the Fuc-Gal-Xyl trisaccharide side chains of xyloglucan oligomers. The protein is Xyloglucan O-acetyltransferase 1 of Populus trichocarpa (Western balsam poplar).